A 358-amino-acid polypeptide reads, in one-letter code: 3-dehydroquinate synthase (358 aa).

NAD(+)-binding positions include 102-106 (GVVGD), 126-127 (TT), Lys-138, and Lys-147. Positions 180, 243, and 260 each coordinate Zn(2+).

The protein belongs to the sugar phosphate cyclases superfamily. Dehydroquinate synthase family. It depends on Co(2+) as a cofactor. Zn(2+) is required as a cofactor. Requires NAD(+) as cofactor.

It localises to the cytoplasm. It carries out the reaction 7-phospho-2-dehydro-3-deoxy-D-arabino-heptonate = 3-dehydroquinate + phosphate. It functions in the pathway metabolic intermediate biosynthesis; chorismate biosynthesis; chorismate from D-erythrose 4-phosphate and phosphoenolpyruvate: step 2/7. Functionally, catalyzes the conversion of 3-deoxy-D-arabino-heptulosonate 7-phosphate (DAHP) to dehydroquinate (DHQ). The protein is 3-dehydroquinate synthase of Shouchella clausii (strain KSM-K16) (Alkalihalobacillus clausii).